Here is a 425-residue protein sequence, read N- to C-terminus: Amidase 1 (425 aa).

Ala-2 is subject to N-acetylalanine. Residues Lys-36 and Ser-113 each act as charge relay system in the active site. Residue Ser-137 is the Acyl-ester intermediate of the active site.

The protein belongs to the amidase family. Expressed in cotyledons, leaves and flower buds. Lower levels in roots, stems and siliques.

Its subcellular location is the cytoplasm. It is found in the nucleus. It localises to the nucleoplasm. It catalyses the reaction a monocarboxylic acid amide + H2O = a monocarboxylate + NH4(+). The enzyme catalyses indole-3-acetamide + H2O = (indol-3-yl)acetate + NH4(+). The catalysed reaction is 2-phenylacetamide + H2O = 2-phenylacetate + NH4(+). It carries out the reaction L-asparagine + H2O = L-aspartate + NH4(+). It catalyses the reaction 1-naphthaleneacetamide + H2O = 1-naphthaleneacetate + NH4(+). With respect to regulation, inhibited by phenylmethylsulfonyl fluoride (PMSF). Its function is as follows. Amidase involved in auxin biosynthesis. Converts indole-3-acetamide to indole-3-acetate. Converts phenyl-2-acetamide (PAM) to phenyl-2-acetate. Substrate preference is PAM &gt; IAM. Can also use L-asparagine and 1-naphtalene-acetamide as substrates, but not indole-3-acetonitrile or indole-3-acetyl-L-aspartic acid. The protein is Amidase 1 of Arabidopsis thaliana (Mouse-ear cress).